A 347-amino-acid polypeptide reads, in one-letter code: MRIEQELKLGFKDVLFRPKRSTLKSRSQVELTREFTFKHSGRQWSGTPVIAANMDSVGSFAMAKALSEHGVMTAIHKHYTVEDWAGFVKENDASVLNNSMVSTGTSDADFQKTKDIMALTDDLIFICVDIANGYSEHLVQYVEKVRAEFPDKVISAGNVVTGDMVEELILAGADIVKVGIGPGSVCTTRVKTGVGYPQLSAIIECADAAHGLGGRIIGDGGCSCAGDVSKAFGGGADFVMLGGMLAGHEESGGEVIEQDGKQFMKFYGMSSQSAMDKHSGGVAKYRAAEGKTVLLPYRGSVHTTISDILGGVRSTCTYVGAAKLRELTKRTTFIRVQEQENNVYGKE.

NADP(+) is bound at residue 108–131; the sequence is ADFQKTKDIMALTDDLIFICVDIA. K(+) is bound by residues G181 and G183. The Thioimidate intermediate role is filled by C186. An NADP(+)-binding site is contributed by 216-239; that stretch reads IIGDGGCSCAGDVSKAFGGGADFV.

This sequence belongs to the IMPDH/GMPR family. GuaC type 1 subfamily. Homotetramer.

The enzyme catalyses IMP + NH4(+) + NADP(+) = GMP + NADPH + 2 H(+). In terms of biological role, catalyzes the irreversible NADPH-dependent deamination of GMP to IMP. It functions in the conversion of nucleobase, nucleoside and nucleotide derivatives of G to A nucleotides, and in maintaining the intracellular balance of A and G nucleotides. The chain is GMP reductase from Aliivibrio salmonicida (strain LFI1238) (Vibrio salmonicida (strain LFI1238)).